Consider the following 223-residue polypeptide: Alpha-S2-casein (223 aa).

Positions 1–15 (MKFFIFTCLLAVALA) are cleaved as a signal peptide. 11 positions are modified to phosphoserine: Ser23, Ser24, Ser25, Ser72, Ser73, Ser74, Ser77, Ser145, Ser147, Ser151, and Ser159. A repeat spans 77–141 (SAEVAPEEIK…AGPFTPTVNR (65 aa)). A repeat spans 159 to 223 (STEVFTKKTK…TNAIPYVRYL (65 aa)).

This sequence belongs to the alpha-casein family. Mammary gland specific. Secreted in milk.

Its subcellular location is the secreted. Functionally, important role in the capacity of milk to transport calcium phosphate. This is Alpha-S2-casein (CSN1S2) from Capra hircus (Goat).